The following is a 305-amino-acid chain: Glutaminase (305 aa).

Ser-61, Asn-113, Glu-158, Asn-165, Tyr-189, Tyr-241, and Val-259 together coordinate substrate.

This sequence belongs to the glutaminase family. In terms of assembly, homotetramer.

The catalysed reaction is L-glutamine + H2O = L-glutamate + NH4(+). In Clostridium botulinum (strain 657 / Type Ba4), this protein is Glutaminase.